The sequence spans 228 residues: ATP-dependent dethiobiotin synthetase BioD (228 aa).

12-17 (EIGKTT) lines the ATP pocket. Residue Thr16 coordinates Mg(2+). Residue Lys37 is part of the active site. Ser41 is a substrate binding site. ATP-binding positions include Asp54, 116–119 (EGAG), and 205–207 (PRL). 2 residues coordinate Mg(2+): Asp54 and Glu116.

This sequence belongs to the dethiobiotin synthetase family. In terms of assembly, homodimer. Mg(2+) serves as cofactor.

The protein localises to the cytoplasm. The enzyme catalyses (7R,8S)-7,8-diammoniononanoate + CO2 + ATP = (4R,5S)-dethiobiotin + ADP + phosphate + 3 H(+). It functions in the pathway cofactor biosynthesis; biotin biosynthesis; biotin from 7,8-diaminononanoate: step 1/2. Functionally, catalyzes a mechanistically unusual reaction, the ATP-dependent insertion of CO2 between the N7 and N8 nitrogen atoms of 7,8-diaminopelargonic acid (DAPA, also called 7,8-diammoniononanoate) to form a ureido ring. The chain is ATP-dependent dethiobiotin synthetase BioD from Pseudomonas aeruginosa (strain ATCC 15692 / DSM 22644 / CIP 104116 / JCM 14847 / LMG 12228 / 1C / PRS 101 / PAO1).